The sequence spans 369 residues: IST1-like protein (369 aa).

Residues 12 to 59 (KLKVQLKLAVSRIQILKNKKANIVRDEKRNVAELLRKKNEESARIRVE) are a coiled coil. The interval 224–354 (QIIQQQQQPQ…SSDTGYPDYD (131 aa)) is disordered. 2 stretches are compositionally biased toward low complexity: residues 225–239 (IIQQ…SFPI) and 246–270 (PTFS…SPQF). Residues 277–305 (FYNNNSGNQTPQFPTISTNNSDGYSNDKF) are compositionally biased toward polar residues. The span at 306–337 (NNGNNNYNNNNNNNNNNNNNNNHNNNNNNNNN) shows a compositional bias: low complexity.

This sequence belongs to the IST1 family.

The sequence is that of IST1-like protein from Dictyostelium discoideum (Social amoeba).